Reading from the N-terminus, the 351-residue chain is Photosystem II D2 protein (351 aa).

The helical transmembrane segment at 39–59 (CAFLALGGWLTGTTFVTSWYT) threads the bilayer. H116 is a chlorophyll a binding site. The helical transmembrane segment at 123 to 139 (GFMLRQFEIARLVGIRP) threads the bilayer. The pheophytin a site is built by Q128 and N141. A helical transmembrane segment spans residues 151-164 (VFVSVFLMYPLGQS). H196 is a chlorophyll a binding site. The chain crosses the membrane as a helical span at residues 206–226 (GALLCAIHGATVENTLFEDGE). A plastoquinone contacts are provided by H213 and F260. Fe cation is bound at residue H213. H267 is a binding site for Fe cation. Residues 277–293 (GLWMSAVGIVGLALNLR) traverse the membrane as a helical segment.

Belongs to the reaction center PufL/M/PsbA/D family. PSII is composed of 1 copy each of membrane proteins PsbA, PsbB, PsbC, PsbD, PsbE, PsbF, PsbH, PsbI, PsbJ, PsbK, PsbL, PsbM, PsbT, PsbX, PsbY, PsbZ, Psb30/Ycf12, peripheral proteins PsbO, CyanoQ (PsbQ), PsbU, PsbV and a large number of cofactors. It forms dimeric complexes. The cofactor is The D1/D2 heterodimer binds P680, chlorophylls that are the primary electron donor of PSII, and subsequent electron acceptors. It shares a non-heme iron and each subunit binds pheophytin, quinone, additional chlorophylls, carotenoids and lipids. There is also a Cl(-1) ion associated with D1 and D2, which is required for oxygen evolution. The PSII complex binds additional chlorophylls, carotenoids and specific lipids..

The protein resides in the cellular thylakoid membrane. The enzyme catalyses 2 a plastoquinone + 4 hnu + 2 H2O = 2 a plastoquinol + O2. In terms of biological role, photosystem II (PSII) is a light-driven water:plastoquinone oxidoreductase that uses light energy to abstract electrons from H(2)O, generating O(2) and a proton gradient subsequently used for ATP formation. It consists of a core antenna complex that captures photons, and an electron transfer chain that converts photonic excitation into a charge separation. The D1/D2 (PsbA/PsbD) reaction center heterodimer binds P680, the primary electron donor of PSII as well as several subsequent electron acceptors. D2 is needed for assembly of a stable PSII complex. This Trichormus variabilis (strain ATCC 29413 / PCC 7937) (Anabaena variabilis) protein is Photosystem II D2 protein.